A 729-amino-acid polypeptide reads, in one-letter code: Disintegrin and metalloproteinase domain-containing protein 21 (729 aa).

A signal peptide spans 1–39; sequence MECFIMLGADARTLMRVTLLLLWLKALPSLIDLSQTGST. A propeptide spanning residues 40 to 209 is cleaved from the precursor; that stretch reads QYLSSPEVVI…MKQNYGKLWP (170 aa). Residue asparagine 169 is glycosylated (N-linked (GlcNAc...) asparagine). Positions 176 to 183 match the Cysteine switch motif; the sequence is MLCSLTEK. Cysteine 178 provides a ligand contact to Zn(2+). Topologically, residues 210 to 685 are extracellular; the sequence is HMWFLELAVV…DSGPTSQKRR (476 aa). In terms of domain architecture, Peptidase M12B spans 212–402; it reads WFLELAVVVD…NQGTCLYNHP (191 aa). Asparagine 231 carries an N-linked (GlcNAc...) asparagine glycan. Cystine bridges form between cysteine 320-cysteine 397, cysteine 360-cysteine 382, and cysteine 362-cysteine 367. Histidine 345 serves as a coordination point for Zn(2+). The active site involves glutamate 346. Zn(2+)-binding residues include histidine 349 and histidine 355. Asparagine 381, asparagine 441, and asparagine 482 each carry an N-linked (GlcNAc...) asparagine glycan. The 87-residue stretch at 410-496 folds into the Disintegrin domain; that stretch reads VKRCGNGMVE…QCPEDGYVQD (87 aa). Intrachain disulfides connect cysteine 468/cysteine 488, cysteine 638/cysteine 649, cysteine 643/cysteine 655, and cysteine 657/cysteine 666. Positions 638-667 constitute an EGF-like domain; it reads CLPETCNRKGVCNNKHHCHCDYGWSPPFCL. Residues 686–706 traverse the membrane as a helical segment; that stretch reads VIITVLSITVPVLSILICLLI. Residues 707-729 lie on the Cytoplasmic side of the membrane; it reads AGLYRIYCKIPSGPKETKASSPG.

Zn(2+) is required as a cofactor. Post-translationally, has no obvious cleavage site for furin endopeptidase, suggesting that the proteolytic processing is regulated. In terms of tissue distribution, highly expressed in Leydig cells. Expressed also in cauda epididymidis, vas deferens, convoluted tubules, kidney and the parietal cells of stomach. Not detected on developing spermatocytes or mature sperm.

The protein resides in the membrane. In terms of biological role, may be involved in sperm maturation and/or fertilization. May also be involved in epithelia functions associated with establishing and maintaining gradients of ions or nutrients. The polypeptide is Disintegrin and metalloproteinase domain-containing protein 21 (Adam21) (Mus musculus (Mouse)).